The primary structure comprises 166 residues: Probable dual specificity protein phosphatase H1 homolog (166 aa).

In terms of domain architecture, Tyrosine-protein phosphatase spans 25 to 166; sequence DITKITDYVY…FLNQIIDKYI (142 aa). The active-site Phosphocysteine intermediate is Cys108.

Belongs to the protein-tyrosine phosphatase family. Non-receptor class dual specificity subfamily. As to quaternary structure, homodimer.

The protein resides in the virion. It localises to the host cytoplasm. It carries out the reaction O-phospho-L-tyrosyl-[protein] + H2O = L-tyrosyl-[protein] + phosphate. The enzyme catalyses O-phospho-L-seryl-[protein] + H2O = L-seryl-[protein] + phosphate. Its function is as follows. Serine/Tyrosine phosphatase which down-regulates cellular antiviral response by dephosphorylating activated STAT1 and blocking interferon (IFN)-stimulated innate immune responses. The protein is Probable dual specificity protein phosphatase H1 homolog of Vertebrata (FPV).